The chain runs to 104 residues: MKIHKGDTVIVISGPDKGAKGKVIEAYPKRDKVLVEGVNRIKKHVANSAPERGAESGGIVTQEAPIHVSNVMIIDADGNPTRVGYRFDENGKKVRISRRTGKDI.

It belongs to the universal ribosomal protein uL24 family. Part of the 50S ribosomal subunit.

One of two assembly initiator proteins, it binds directly to the 5'-end of the 23S rRNA, where it nucleates assembly of the 50S subunit. Its function is as follows. One of the proteins that surrounds the polypeptide exit tunnel on the outside of the subunit. In Corynebacterium kroppenstedtii (strain DSM 44385 / JCM 11950 / CIP 105744 / CCUG 35717), this protein is Large ribosomal subunit protein uL24.